A 324-amino-acid polypeptide reads, in one-letter code: Serine racemase (324 aa).

ATP contacts are provided by S32, K51, and T52. K56 (proton acceptor) is an active-site residue. At K56 the chain carries N6-(pyridoxal phosphate)lysine. T78 provides a ligand contact to Ca(2+). S81 serves as the catalytic Proton acceptor. Pyridoxal 5'-phosphate is bound at residue N83. ATP contacts are provided by Q86 and Y118. D175 is a Mg(2+) binding site. Pyridoxal 5'-phosphate is bound by residues G182, G183, G184, and G185. Positions 207, 211, and 213 each coordinate Ca(2+). Mg(2+) is bound by residues E207, A211, and D213. Positions 207, 211, and 213 each coordinate Mn(2+). K277 contacts ATP. S310 lines the pyridoxal 5'-phosphate pocket. An ATP-binding site is contributed by N313.

It belongs to the serine/threonine dehydratase family. As to quaternary structure, homodimer. Mg(2+) is required as a cofactor. The cofactor is Mn(2+). Ca(2+) serves as cofactor. Requires pyridoxal 5'-phosphate as cofactor.

It carries out the reaction L-serine = D-serine. It catalyses the reaction L-serine = pyruvate + NH4(+). The enzyme catalyses D-serine = pyruvate + NH4(+). Its function is as follows. Catalyzes the synthesis of D-serine from L-serine. Has dehydratase activity towards both L-serine and D-serine. The protein is Serine racemase (srr) of Dictyostelium discoideum (Social amoeba).